The primary structure comprises 98 residues: Keratinocyte differentiation-associated protein (98 aa).

The N-terminal stretch at 1 to 22 is a signal peptide; the sequence is MKIPILPIVALLSLLALHAAQG.

Ubiquitously expressed in stratified epithelium.

The protein localises to the secreted. In terms of biological role, may act as a soluble regulator of keratinocyte differentiation. May play an important role in embryonic skin morphogenesis. This chain is Keratinocyte differentiation-associated protein, found in Rattus norvegicus (Rat).